The chain runs to 294 residues: Phosphatidylglycerol--prolipoprotein diacylglyceryl transferase (294 aa).

7 consecutive transmembrane segments (helical) span residues 21-41, 60-80, 96-116, 124-144, 199-219, 226-246, and 259-279; these read VSLHWYGMMYLIGFVFALWLA, LLYVGFVGVFIGGRLGYVLFY, WDGGMSFHGGLIGVICAMIWF, FFQVADFVAPLIPFGLGLGRI, SQLYEMFLEGVVLFIILNIFV, GSVSGLFLIGYGAFRIIVEFF, and ISMGQILSIPMIILGIIFMVW. Residue arginine 143 participates in a 1,2-diacyl-sn-glycero-3-phospho-(1'-sn-glycerol) binding.

Belongs to the Lgt family.

Its subcellular location is the cell inner membrane. It carries out the reaction L-cysteinyl-[prolipoprotein] + a 1,2-diacyl-sn-glycero-3-phospho-(1'-sn-glycerol) = an S-1,2-diacyl-sn-glyceryl-L-cysteinyl-[prolipoprotein] + sn-glycerol 1-phosphate + H(+). It functions in the pathway protein modification; lipoprotein biosynthesis (diacylglyceryl transfer). In terms of biological role, catalyzes the transfer of the diacylglyceryl group from phosphatidylglycerol to the sulfhydryl group of the N-terminal cysteine of a prolipoprotein, the first step in the formation of mature lipoproteins. This Proteus mirabilis (strain HI4320) protein is Phosphatidylglycerol--prolipoprotein diacylglyceryl transferase.